A 410-amino-acid polypeptide reads, in one-letter code: Multifunctional CCA protein (410 aa).

2 residues coordinate ATP: glycine 8 and arginine 11. Glycine 8 and arginine 11 together coordinate CTP. The Mg(2+) site is built by aspartate 21 and aspartate 23. ATP contacts are provided by arginine 91, arginine 137, and arginine 140. CTP-binding residues include arginine 91, arginine 137, and arginine 140. One can recognise an HD domain in the interval 228-329; it reads TGVHVLSVLQ…LELLQSFDVY (102 aa).

This sequence belongs to the tRNA nucleotidyltransferase/poly(A) polymerase family. Bacterial CCA-adding enzyme type 1 subfamily. Monomer. Can also form homodimers and oligomers. Mg(2+) is required as a cofactor. Requires Ni(2+) as cofactor.

It carries out the reaction a tRNA precursor + 2 CTP + ATP = a tRNA with a 3' CCA end + 3 diphosphate. The enzyme catalyses a tRNA with a 3' CCA end + 2 CTP + ATP = a tRNA with a 3' CCACCA end + 3 diphosphate. Functionally, catalyzes the addition and repair of the essential 3'-terminal CCA sequence in tRNAs without using a nucleic acid template. Adds these three nucleotides in the order of C, C, and A to the tRNA nucleotide-73, using CTP and ATP as substrates and producing inorganic pyrophosphate. tRNA 3'-terminal CCA addition is required both for tRNA processing and repair. Also involved in tRNA surveillance by mediating tandem CCA addition to generate a CCACCA at the 3' terminus of unstable tRNAs. While stable tRNAs receive only 3'-terminal CCA, unstable tRNAs are marked with CCACCA and rapidly degraded. The polypeptide is Multifunctional CCA protein (Pseudomonas aeruginosa (strain ATCC 15692 / DSM 22644 / CIP 104116 / JCM 14847 / LMG 12228 / 1C / PRS 101 / PAO1)).